Here is an 856-residue protein sequence, read N- to C-terminus: DNA mismatch repair protein MutS (856 aa).

618–625 (GPNMGGKS) lines the ATP pocket.

Belongs to the DNA mismatch repair MutS family.

In terms of biological role, this protein is involved in the repair of mismatches in DNA. It is possible that it carries out the mismatch recognition step. This protein has a weak ATPase activity. The protein is DNA mismatch repair protein MutS of Shewanella putrefaciens (strain CN-32 / ATCC BAA-453).